The chain runs to 444 residues: MGKGGNQGEGSTERQAPMPTFRWEEIQKHNLRTDRWLVIDRKVYNVTKWSQRHPGGHRVIGHYSGEDATDAFRAFHLDLDFVGKFLKPLLIGELAPEEPSLDRGKSSQITEDFRALKKTAEDMNLFKTNHLFFFLLLSHIIVMESLAWFILSYFGTGWIPTLVTAFVLATSQAQAGWLQHDYGHLSVYKKSIWNHVVHKFVIGHLKGASANWWNHRHFQHHAKPNIFHKDPDIKSLHVFVLGEWQPLEYGKKKLKYLPYNHQHEYFFLIGPPLLIPMYFQYQIIMTMISRRDWVDLAWAISYYMRFFYTYIPFYGILGALVFLNFIRFLESHWFVWVTQMNHLVMEIDLDHYRDWFSSQLAATCNVEQSFFNDWFSGHLNFQIEHHLFPTMPRHNLHKIAPLVKSLCAKHGIEYQEKPLLRALIDIVSSLKKSGELWLDAYLHK.

The segment at Met-1–Phe-21 is disordered. Residues Met-1–His-130 lie on the Cytoplasmic side of the membrane. In terms of domain architecture, Cytochrome b5 heme-binding spans Met-18–Ala-95. A helical membrane pass occupies residues Leu-131–Leu-151. A topological domain (lumenal) is located at residue Ser-152. The chain crosses the membrane as a helical span at residues Tyr-153 to Ala-173. Residues Gln-174–Glu-264 are Cytoplasmic-facing. The Histidine box-1 motif lies at His-180–His-184. The short motif at His-217–His-221 is the Histidine box-2 element. Residues Tyr-265–Met-285 traverse the membrane as a helical segment. Over Thr-286–Arg-305 the chain is Lumenal. A helical transmembrane segment spans residues Phe-306–Ile-326. At Arg-327–Lys-444 the chain is on the cytoplasmic side. The Histidine box-3 motif lies at Gln-382–His-386.

It belongs to the fatty acid desaturase type 1 family. In terms of tissue distribution, highly expressed in the adrenal gland, liver, brain, and testis, tissues where lipogenesis and steroidogenesis are active. Also detected in lung, heart, and skeletal muscle.

The protein localises to the endoplasmic reticulum membrane. The enzyme catalyses (9Z,12Z)-octadecadienoyl-CoA + 2 Fe(II)-[cytochrome b5] + O2 + 2 H(+) = (6Z,9Z,12Z)-octadecatrienoyl-CoA + 2 Fe(III)-[cytochrome b5] + 2 H2O. It carries out the reaction (9Z,12Z,15Z)-octadecatrienoyl-CoA + 2 Fe(II)-[cytochrome b5] + O2 + 2 H(+) = (6Z,9Z,12Z,15Z)-octadecatetraenoyl-CoA + 2 Fe(III)-[cytochrome b5] + 2 H2O. The catalysed reaction is (9Z,12Z,15Z,18Z,21Z)-tetracosapentaenoyl-CoA + 2 Fe(II)-[cytochrome b5] + O2 + 2 H(+) = (6Z,9Z,12Z,15Z,18Z,21Z)-tetracosahexaenoyl-CoA + 2 Fe(III)-[cytochrome b5] + 2 H2O. It catalyses the reaction (11E)-octadecenoyl-CoA + 2 Fe(II)-[cytochrome b5] + O2 + 2 H(+) = (6Z,11E)-octadecadienoyl-CoA + 2 Fe(III)-[cytochrome b5] + 2 H2O. The enzyme catalyses (11Z,14Z)-eicosadienoyl-CoA + 2 Fe(II)-[cytochrome b5] + O2 + 2 H(+) = (8Z,11Z,14Z)-eicosatrienoyl-CoA + 2 Fe(III)-[cytochrome b5] + 2 H2O. It carries out the reaction (11Z,14Z,17Z)-eicosatrienoyl-CoA + 2 Fe(II)-[cytochrome b5] + O2 + 2 H(+) = (8Z,11Z,14Z,17Z)-eicosatetraenoyl-CoA + 2 Fe(III)-[cytochrome b5] + 2 H2O. It participates in lipid metabolism; polyunsaturated fatty acid biosynthesis. Involved in the biosynthesis of highly unsaturated fatty acids (HUFA) from the essential polyunsaturated fatty acids (PUFA) linoleic acid (LA) (18:2n-6) and alpha-linolenic acid (ALA) (18:3n-3) precursors, acting as a fatty acyl-coenzyme A (CoA) desaturase that introduces a cis double bond at carbon 6 of the fatty acyl chain. Catalyzes the first and rate limiting step in this pathway which is the desaturation of LA (18:2n-6) and ALA (18:3n-3) into gamma-linoleate (GLA) (18:3n-6) and stearidonate (18:4n-3), respectively. Subsequently, in the biosynthetic pathway of HUFA n-3 series, it desaturates tetracosapentaenoate (24:5n-3) to tetracosahexaenoate (24:6n-3), which is then converted to docosahexaenoate (DHA)(22:6n-3), an important lipid for nervous system function. It can also desaturate (11E)-octadecenoate (trans-vaccenoate) at carbon 6 generating (6Z,11E)-octadecadienoate. In addition to Delta-6 activity, this enzyme exhibits Delta-8 activity with slight biases toward n-3 fatty acyl-CoA substrates. This Mus musculus (Mouse) protein is Acyl-CoA 6-desaturase.